Here is a 1202-residue protein sequence, read N- to C-terminus: Protein HASTY 1 (1202 aa).

M1 is subject to N-acetylmethionine.

The protein belongs to the exportin family. As to quaternary structure, interacts with RAN1. In terms of tissue distribution, expressed in roots, leaves and floral buds.

Its subcellular location is the nucleus. Its function is as follows. Nucleocytoplasmic transporter involved in the nuclear export of microRNAs (miRNAs). Required for several miRNAs accumulation. Specifically required for miR156 accumulation which targets SPL3, SPL4 and SPL5 transcription factors. Involved in plant development through its role in miRNAs processing. Required for vegetative phase change and vegetative to reproductive phase transition. Functionally dependent on RAN1 binding. Does not seem to be involved in small interfering RNAs (siRNAs) processing. The chain is Protein HASTY 1 (HST1) from Arabidopsis thaliana (Mouse-ear cress).